A 198-amino-acid polypeptide reads, in one-letter code: 7-methyl-GTP pyrophosphatase (198 aa).

The active-site Proton acceptor is Asp75.

Belongs to the Maf family. YceF subfamily. A divalent metal cation serves as cofactor.

The protein resides in the cytoplasm. The catalysed reaction is N(7)-methyl-GTP + H2O = N(7)-methyl-GMP + diphosphate + H(+). Its function is as follows. Nucleoside triphosphate pyrophosphatase that hydrolyzes 7-methyl-GTP (m(7)GTP). May have a dual role in cell division arrest and in preventing the incorporation of modified nucleotides into cellular nucleic acids. This Nitrosospira multiformis (strain ATCC 25196 / NCIMB 11849 / C 71) protein is 7-methyl-GTP pyrophosphatase.